We begin with the raw amino-acid sequence, 336 residues long: Glyceraldehyde-3-phosphate dehydrogenase (336 aa).

Residues 12–13, Asp34, Arg78, and Ser120 each bind NAD(+); that span reads RI. Residues 151 to 153 and Thr182 each bind D-glyceraldehyde 3-phosphate; that span reads SCT. The Nucleophile role is filled by Cys152. Asn183 lines the NAD(+) pocket. Residues 211–212 and Arg234 each bind D-glyceraldehyde 3-phosphate; that span reads NG. Asn316 contributes to the NAD(+) binding site.

Belongs to the glyceraldehyde-3-phosphate dehydrogenase family. Homotetramer.

It localises to the cytoplasm. It catalyses the reaction D-glyceraldehyde 3-phosphate + phosphate + NAD(+) = (2R)-3-phospho-glyceroyl phosphate + NADH + H(+). It functions in the pathway carbohydrate degradation; glycolysis; pyruvate from D-glyceraldehyde 3-phosphate: step 1/5. Catalyzes the oxidative phosphorylation of glyceraldehyde 3-phosphate (G3P) to 1,3-bisphosphoglycerate (BPG) using the cofactor NAD. The first reaction step involves the formation of a hemiacetal intermediate between G3P and a cysteine residue, and this hemiacetal intermediate is then oxidized to a thioester, with concomitant reduction of NAD to NADH. The reduced NADH is then exchanged with the second NAD, and the thioester is attacked by a nucleophilic inorganic phosphate to produce BPG. This Heyndrickxia coagulans (Weizmannia coagulans) protein is Glyceraldehyde-3-phosphate dehydrogenase (gap).